We begin with the raw amino-acid sequence, 249 residues long: Methionine aminopeptidase (249 aa).

A substrate-binding site is contributed by His-77. Residues Asp-94, Asp-105, and His-168 each contribute to the a divalent metal cation site. His-175 is a binding site for substrate. A divalent metal cation is bound by residues Glu-201 and Glu-232.

The protein belongs to the peptidase M24A family. Methionine aminopeptidase type 1 subfamily. In terms of assembly, monomer. Co(2+) is required as a cofactor. It depends on Zn(2+) as a cofactor. Requires Mn(2+) as cofactor. Fe(2+) serves as cofactor.

It catalyses the reaction Release of N-terminal amino acids, preferentially methionine, from peptides and arylamides.. In terms of biological role, removes the N-terminal methionine from nascent proteins. The N-terminal methionine is often cleaved when the second residue in the primary sequence is small and uncharged (Met-Ala-, Cys, Gly, Pro, Ser, Thr, or Val). Requires deformylation of the N(alpha)-formylated initiator methionine before it can be hydrolyzed. This chain is Methionine aminopeptidase, found in Clostridium perfringens (strain 13 / Type A).